A 284-amino-acid chain; its full sequence is Tropomyosin (284 aa).

Residues Met1–Phe284 adopt a coiled-coil conformation. Residues Glu97–Arg140 form a disordered region. Positions Gln101–Ser110 are enriched in polar residues. A compositionally biased stretch (basic and acidic residues) spans Thr111 to Arg140.

It belongs to the tropomyosin family. As to quaternary structure, homodimer.

Functionally, tropomyosin, in association with the troponin complex, plays a central role in the calcium dependent regulation of muscle contraction. This chain is Tropomyosin, found in Echinococcus multilocularis (Fox tapeworm).